Consider the following 266-residue polypeptide: HTH-type transcriptional regulator MurR (266 aa).

The HTH rpiR-type domain occupies 1–77; that stretch reads MLYLTKIRNA…MALIGEYSAS (77 aa). The H-T-H motif DNA-binding region spans 37–56; the sequence is SRQMAKQLGISQSSIVKFAQ. The 139-residue stretch at 128 to 266 folds into the SIS domain; the sequence is IIEVISKAPF…LLFVGLVQHQ (139 aa).

In terms of assembly, homotetramer.

It participates in amino-sugar metabolism; N-acetylmuramate degradation [regulation]. Functionally, represses the expression of the murPQ operon involved in the uptake and degradation of N-acetylmuramic acid (MurNAc). Binds to two adjacent inverted repeats within the operator region. MurNAc 6-phosphate, the substrate of MurQ, is the specific inducer that weakens binding of MurR to the operator. This Shigella flexneri serotype 5b (strain 8401) protein is HTH-type transcriptional regulator MurR.